Consider the following 272-residue polypeptide: MTTATATATATPGTAAKPVALVTGATSGIGLAIARRLAALGARTFLCARDEERLAQTVKELRGEGFDVDGTVCDVADPAQIRAYVAAAVQRYGTVDILVNNAGRSGGGATAEIADELWLDVITTNLTSVFLMTKEVLNAGGMLAKKRGRIINIASTGGKQGVVHAVPYSASKHGVVGLTKALGLELARTGITVNAVCPGFVETPMAERVREHYAGIWQVSEEETFDRITNRVPLGRYVETREVAAMVEYLVADDAAAVTAQALNVCGGLGNY.

21–45 (LVTGATSGIGLAIARRLAALGARTF) serves as a coordination point for NAD(+). Ser155 contacts substrate. Tyr168 serves as the catalytic Proton acceptor.

The protein belongs to the short-chain dehydrogenases/reductases (SDR) family.

The protein operates within antibiotic biosynthesis; granaticin biosynthesis. In Streptomyces violaceoruber, this protein is Granaticin polyketide synthase putative ketoacyl reductase 1 (gra-orf5).